A 1420-amino-acid chain; its full sequence is ABC transporter G family member 32 (1420 aa).

Residues 135-408 (LRNIHVIGGK…FSSLGFTCPD (274 aa)) enclose the ABC transporter 1 domain. ATP is bound at residue 168–175 (GPPSSGKT). Positions 486–699 (ELLKINFAWQ…AQNAASVNEF (214 aa)) constitute an ABC transmembrane type-2 1 domain. The next 7 helical transmembrane spans lie at 504–524 (FIYV…MTVF), 544–564 (LYFS…MLVA), 585–605 (LPSW…WVAV), 623–643 (FLLY…MGSL), 648–668 (IVAN…GGFI), 674–694 (IPSW…QNAA), and 735–755 (IGVA…TLFL). The ABC transporter 2 domain occupies 818–1070 (LSFSNINYYV…ELIKYFESIE (253 aa)). Position 863–870 (863–870 (GVSGAGKT)) interacts with ATP. Residues 1143 to 1357 (SQFVACLWKQ…TLYGLLVSQY (215 aa)) enclose the ABC transmembrane type-2 2 domain. The next 7 helical transmembrane spans lie at 1162-1182 (YTAV…TICW), 1202-1222 (YAAV…VVSI), 1235-1255 (MYSA…YVLA), 1277-1297 (FLWY…YGMM), 1307-1327 (VASI…GFMI), 1334-1354 (LWWR…GLLV), and 1392-1412 (VSAI…AFAI).

Belongs to the ABC transporter superfamily. ABCG family. PDR (TC 3.A.1.205) subfamily. Ubiquitous in aerial organs. Higher expression levels in young, expanding tissues than in older tissues. Detected in the epidermal layer.

It is found in the cell membrane. Its function is as follows. May be a general defense protein. Required for the formation of the cuticle layer of the cell wall. This is ABC transporter G family member 32 from Arabidopsis thaliana (Mouse-ear cress).